The following is a 437-amino-acid chain: O-antigen export system ATP-binding protein RfbB (437 aa).

The ABC transporter domain maps to 37–256 (LRGKRQSRDA…YREAISLAEA (220 aa)). 69–76 (GRNGSGKS) provides a ligand contact to ATP.

Belongs to the ABC transporter superfamily.

Its subcellular location is the cell inner membrane. In terms of biological role, may form an ATP-driven O-antigen export apparatus, in association with RfbA. The protein is O-antigen export system ATP-binding protein RfbB (rfbB) of Myxococcus xanthus.